We begin with the raw amino-acid sequence, 612 residues long: MSDKSDLKAELERKKQRLAQIREEKKRKEEERKKKETDQKKEAAVSVQEESDLEKKRREAEALLQSMGLTTDSPIVPPPMSPSSKSVSTPSEAGSQDSGDGAVGSRRGPIKLGMAKITQVDFPPREIVTYTKETQTPVTAQPKEDEEEEDDVATPKPPVEPEEEKTLKKDEENDSKAPPHELTEEEKQQILHSEEFLSFFDHSTRIVERALSEQINIFFDYSGRDLEDKEGEIQAGAKLSLNRQFFDERWSKHRVVSCLDWSSQYPELLVASYNNNEEAPHEPDGVALVWNMKYKKTTPEYVFHCQSAVMSATFAKFHPNLVVGGTYSGQIVLWDNRSNKRTPVQRTPLSAAAHTHPVYCVNVVGTQNAHNLISISTDGKICSWSLDMLSHPQDSMELVHKQSKAVAVTSMSFPVGDVNNFVVGSEEGSVYTACRHGSKAGISEMFEGHQGPITGIHCHAAVGAVDFSHLFVTSSFDWTVKLWTTKNNKPLYSFEDNSDYVYDVMWSPTHPALFACVDGMGRLDLWNLNNDTEVPTASISVEGNPALNRVRWTHSGREIAVGDSEGQIVIYDVGEQIAVPRNDEWARFGRTLAEINANRADAEEEAATRIPA.

Basic and acidic residues-rich tracts occupy residues 1 to 13 (MSDK…ELER) and 20 to 43 (QIRE…KKEA). Residues 1–188 (MSDKSDLKAE…PHELTEEEKQ (188 aa)) form a disordered region. Ser2 carries the post-translational modification N-acetylserine. Position 51 is a diphosphoserine (Ser51). Phosphoserine occurs at positions 51 and 84. Positions 82-91 (PSSKSVSTPS) are enriched in low complexity. Thr89 is subject to Phosphothreonine. 3 positions are modified to phosphoserine: Ser91, Ser95, and Ser98. Positions 164–188 (EKTLKKDEENDSKAPPHELTEEEKQ) are enriched in basic and acidic residues. WD repeat units follow at residues 251 to 300 (SKHR…TTPE), 304 to 344 (HCQS…RTPV), 353 to 394 (AHTH…HPQD), 403 to 443 (SKAV…AGIS), 448 to 493 (GHQG…PLYS), 496 to 536 (DNSD…EVPT), and 542 to 581 (EGNP…AVPR).

This sequence belongs to the dynein intermediate chain family. As to quaternary structure, homodimer. The cytoplasmic dynein 1 complex consists of two catalytic heavy chains (HCs) and a number of non-catalytic subunits presented by intermediate chains (ICs), light intermediate chains (LICs) and light chains (LCs); the composition seems to vary in respect to the IC, LIC and LC composition. The heavy chain homodimer serves as a scaffold for the probable homodimeric assembly of the respective non-catalytic subunits. The ICs and LICs bind directly to the HC dimer and the LCs assemble on the IC dimer. Interacts with DYNLT3. Interacts with DYNLT1. Interacts (dephosphorylated at Ser-84) with DCTN1. Interacts with BICD2. Interacts with SPEF2. Interacts with CFAP61. In terms of processing, the phosphorylation status of Ser-84 appears to be involved in dynactin-dependent target binding. Post-translationally, pyrophosphorylation by 5-diphosphoinositol pentakisphosphate (5-IP7) promotes interaction with DCTN1. Serine pyrophosphorylation is achieved by Mg(2+)-dependent, but enzyme independent transfer of a beta-phosphate from a inositol pyrophosphate to a pre-phosphorylated serine residue.

Its subcellular location is the cytoplasm. The protein localises to the cytoskeleton. Acts as one of several non-catalytic accessory components of the cytoplasmic dynein 1 complex that are thought to be involved in linking dynein to cargos and to adapter proteins that regulate dynein function. Cytoplasmic dynein 1 acts as a motor for the intracellular retrograde motility of vesicles and organelles along microtubules. The intermediate chains mediate the binding of dynein to dynactin via its 150 kDa component (p150-glued) DCTN1. Involved in membrane-transport, such as Golgi apparatus, late endosomes and lysosomes. This is Cytoplasmic dynein 1 intermediate chain 2 (Dync1i2) from Mus musculus (Mouse).